An 845-amino-acid polypeptide reads, in one-letter code: Protein translocase subunit SecA 1 (845 aa).

ATP-binding positions include glutamine 85, 103 to 107, and aspartate 492; that span reads GEGKT.

This sequence belongs to the SecA family. As to quaternary structure, monomer and homodimer. Part of the essential Sec protein translocation apparatus which comprises SecA, SecYEG and auxiliary proteins SecDF. Other proteins may also be involved.

It is found in the cell membrane. The protein localises to the cytoplasm. The enzyme catalyses ATP + H2O + cellular proteinSide 1 = ADP + phosphate + cellular proteinSide 2.. Part of the Sec protein translocase complex. Interacts with the SecYEG preprotein conducting channel. Has a central role in coupling the hydrolysis of ATP to the transfer of proteins into and across the cell membrane, serving as an ATP-driven molecular motor driving the stepwise translocation of polypeptide chains across the membrane. The sequence is that of Protein translocase subunit SecA 1 from Corynebacterium glutamicum (strain ATCC 13032 / DSM 20300 / JCM 1318 / BCRC 11384 / CCUG 27702 / LMG 3730 / NBRC 12168 / NCIMB 10025 / NRRL B-2784 / 534).